The chain runs to 127 residues: Mediator of RNA polymerase II transcription subunit 31 (127 aa).

Belongs to the Mediator complex subunit 31 family. In terms of assembly, component of the Mediator complex, which is composed of at least 21 subunits that form three structurally distinct submodules. The Mediator head module contains MED6, MED8, MED11, SRB4/MED17, SRB5/MED18, ROX3/MED19, SRB2/MED20 and SRB6/MED22, the middle module contains MED1, MED4, NUT1/MED5, MED7, CSE2/MED9, NUT2/MED10, SRB7/MED21 and SOH1/MED31, and the tail module contains MED2, PGD1/MED3, RGR1/MED14, GAL11/MED15 and SIN4/MED16. The head and the middle modules interact directly with RNA polymerase II, whereas the elongated tail module interacts with gene-specific regulatory proteins.

It localises to the nucleus. Functionally, component of the Mediator complex, a coactivator involved in the regulated transcription of nearly all RNA polymerase II-dependent genes. Mediator functions as a bridge to convey information from gene-specific regulatory proteins to the basal RNA polymerase II transcription machinery. The Mediator complex, having a compact conformation in its free form, is recruited to promoters by direct interactions with regulatory proteins and serves for the assembly of a functional preinitiation complex with RNA polymerase II and the general transcription factors. The Mediator complex unfolds to an extended conformation and partially surrounds RNA polymerase II, specifically interacting with the unphosphorylated form of the C-terminal domain (CTD) of RNA polymerase II. The Mediator complex dissociates from the RNA polymerase II holoenzyme and stays at the promoter when transcriptional elongation begins. This Saccharomyces cerevisiae (strain ATCC 204508 / S288c) (Baker's yeast) protein is Mediator of RNA polymerase II transcription subunit 31 (SOH1).